Here is a 161-residue protein sequence, read N- to C-terminus: Small ribosomal subunit protein uS9 (161 aa).

It belongs to the universal ribosomal protein uS9 family.

In Rickettsia typhi (strain ATCC VR-144 / Wilmington), this protein is Small ribosomal subunit protein uS9.